The chain runs to 83 residues: Heterin-1 (83 aa).

A signal peptide spans 1 to 22 (MNGKLLLVSLMVTMLVMQPAEA). Positions 66–83 (VAGQIPFDEFMDILHYRP) are excised as a propeptide.

Belongs to the non-disulfide-bridged peptide (NDBP) superfamily. Long chain multifunctional peptide (group 2) family. In terms of tissue distribution, expressed by the venom gland.

The protein resides in the secreted. It localises to the target cell membrane. Amphipathic peptide with potent activities against both Gram-positive and Gram-negative bacteria. Is the most active against the two Gram-positive Bacillus megaterium and Micrococcus luteus (MIC=4.0 uM for both). It has relatively low hemolytic activity against human erythrocytes. This is Heterin-1 from Heterometrus spinifer (Asia giant forest scorpion).